The following is a 326-amino-acid chain: MIKDSSVQVEGQEKVCLDQWVAHYRAYAAKGRSASYIPALGEINVSQLGICIVKPDGTMIKSGDWEIPFTLQSISKVIGFIAACLSRGISYVLERVDVEPTGDAFNSIIRLEIHKPGKPFNPMINAGAITIASLLPGTSVQEKLESLYVLIEKMIEKRPAINEIVFQSEWETAHRNRALAYYLKENGFLESDVEETLEVYLKQCSIEINTEDIALIGLILAHDGYHPIRKEQVLPKEVARLTKALMLTCGMYNASGKFAAFIGLPAKSGVSGGIMTLVPSKSRKDLSFQDGCGIGIYGPAIDEYGNSLPGIMLLEHIAKEWDLSIF.

Substrate contacts are provided by Ser-73, Asn-125, Glu-169, Asn-176, Tyr-200, Tyr-252, and Val-270.

This sequence belongs to the glutaminase family. Homotetramer.

The enzyme catalyses L-glutamine + H2O = L-glutamate + NH4(+). The protein is Glutaminase 2 of Bacillus cereus (strain ATCC 14579 / DSM 31 / CCUG 7414 / JCM 2152 / NBRC 15305 / NCIMB 9373 / NCTC 2599 / NRRL B-3711).